The following is a 1012-amino-acid chain: Ankyrin repeat- and BTB/POZ domain-containing protein 3-B (1012 aa).

Residues 160 to 180 traverse the membrane as a helical segment; it reads ILSWTISVNCIAASLSALSMY. ANK repeat units follow at residues 511–540, 557–586, and 595–624; these read QGMT…DINS, RQAT…NVEG, and YTET…DPMI. Positions 831-897 constitute a BTB domain; that stretch reads SDVTFLVEGK…LYCGGTDALH (67 aa).

It localises to the membrane. In Danio rerio (Zebrafish), this protein is Ankyrin repeat- and BTB/POZ domain-containing protein 3-B (abtb3b).